The following is a 362-amino-acid chain: Putative F-box protein At3g23260 (362 aa).

The 46-residue stretch at 1-46 (MEWRSLPVELQEEILSRVPAKYLARLRSTSKQWNALSKTGSFAKKH) folds into the F-box domain.

The polypeptide is Putative F-box protein At3g23260 (Arabidopsis thaliana (Mouse-ear cress)).